Here is a 209-residue protein sequence, read N- to C-terminus: ATP-dependent Clp protease proteolytic subunit (209 aa).

Ser113 serves as the catalytic Nucleophile. His138 is a catalytic residue.

This sequence belongs to the peptidase S14 family. As to quaternary structure, fourteen ClpP subunits assemble into 2 heptameric rings which stack back to back to give a disk-like structure with a central cavity, resembling the structure of eukaryotic proteasomes.

Its subcellular location is the cytoplasm. The enzyme catalyses Hydrolysis of proteins to small peptides in the presence of ATP and magnesium. alpha-casein is the usual test substrate. In the absence of ATP, only oligopeptides shorter than five residues are hydrolyzed (such as succinyl-Leu-Tyr-|-NHMec, and Leu-Tyr-Leu-|-Tyr-Trp, in which cleavage of the -Tyr-|-Leu- and -Tyr-|-Trp bonds also occurs).. Cleaves peptides in various proteins in a process that requires ATP hydrolysis. Has a chymotrypsin-like activity. Plays a major role in the degradation of misfolded proteins. This Blochmanniella floridana protein is ATP-dependent Clp protease proteolytic subunit.